A 622-amino-acid chain; its full sequence is MDENEDSSIAATMGFSGFGKKARTFDLEAMFEQTRRTAVERSKKTLEAREKEEQISNKSPVMKDVPSSSRQKNTDTSSSSSGSEDSSDDELIGPPVPSNLTGDHGDELIGPPLPSGYKDSDDEDEEQHEDDDNPVKGIPDSHEITLQHGTKTVSALGLDPSGARLVTGGFDYDVRFWDFAGMDASLQAFRSLQPCECHQIKSLQYSNTGDVILVVAGNSQAKVLDRDGFPVMECVKGDQYIVDMANTKGHTAMLNGGCWHPKIKEEFMTCSNDGTVRTWDVSNEKKHKGVFKPRSMQGKRVIPTCCTYSRDGKFIAAGCQDGSIQIWDRNMSVHTKFHCRQAHTPGTDTSCVTFSYAGNILATRGGDDTLKTWDIRKFKNPLNVASGLANYFPMTDCCFSPDDKLLITGTSVKRGGGDGKLMFFDVGTFQKVYEIQVTEASVVRCLWHPKLNQIMVGTGNGLAKVYYDPNRSQRGAKLCVVKTQRKARQAETLTQDYIITPHALPMFREPRQRSTRKQLEKDRLDPVKSHKPEPPVAGPGRGGRVGTHGGTLSSFIVKNIALDKTDDSNPREAILRHAKDAEKNPYWVAPAYSKTQPNTVFAEVESDEEETDNEPEWKKRKI.

Basic and acidic residues predominate over residues 37–55 (TAVERSKKTLEAREKEEQI). The tract at residues 37–141 (TAVERSKKTL…DNPVKGIPDS (105 aa)) is disordered. The segment covering 67 to 84 (SSSRQKNTDTSSSSSGSE) has biased composition (low complexity). Residues 120–132 (SDDEDEEQHEDDD) are compositionally biased toward acidic residues. 7 WD repeats span residues 148–187 (HGTK…ASLQ), 195–236 (CECH…ECVK), 249–289 (GHTA…KHKG), 298–337 (GKRV…HTKF), 344–383 (TPGT…NPLN), 389–434 (ANYF…KVYE), and 437–476 (VTEA…QRGA). The segment covering 508–533 (REPRQRSTRKQLEKDRLDPVKSHKPE) has biased composition (basic and acidic residues). Disordered stretches follow at residues 508–549 (REPR…GTHG) and 602–622 (AEVE…KRKI). Over residues 539–549 (PGRGGRVGTHG) the composition is skewed to gly residues. Residues 604–614 (VESDEEETDNE) are compositionally biased toward acidic residues.

Belongs to the WD repeat GAD-1 family.

This chain is WD repeat-containing protein 70 (wdr70), found in Xenopus tropicalis (Western clawed frog).